The chain runs to 368 residues: 3-dehydroquinate synthase (368 aa).

NAD(+) is bound by residues Asp-69 to Lys-74, Gly-103 to Asp-107, Thr-127 to Thr-128, Lys-140, and Lys-149. Residues Glu-182, His-245, and His-262 each coordinate Zn(2+).

The protein belongs to the sugar phosphate cyclases superfamily. Dehydroquinate synthase family. Requires NAD(+) as cofactor. It depends on Co(2+) as a cofactor. The cofactor is Zn(2+).

It is found in the cytoplasm. The catalysed reaction is 7-phospho-2-dehydro-3-deoxy-D-arabino-heptonate = 3-dehydroquinate + phosphate. It functions in the pathway metabolic intermediate biosynthesis; chorismate biosynthesis; chorismate from D-erythrose 4-phosphate and phosphoenolpyruvate: step 2/7. Its function is as follows. Catalyzes the conversion of 3-deoxy-D-arabino-heptulosonate 7-phosphate (DAHP) to dehydroquinate (DHQ). The chain is 3-dehydroquinate synthase from Pseudomonas aeruginosa (strain ATCC 15692 / DSM 22644 / CIP 104116 / JCM 14847 / LMG 12228 / 1C / PRS 101 / PAO1).